The primary structure comprises 460 residues: Bifunctional protein GlmU (460 aa).

The pyrophosphorylase stretch occupies residues Met1–Lys229. Residues Leu9–Gly12, Lys23, Gln74, Gly79–Thr80, Tyr101–Asp103, Gly138, Glu154, Asn169, and Asn227 each bind UDP-N-acetyl-alpha-D-glucosamine. Mg(2+) is bound at residue Asp103. A Mg(2+)-binding site is contributed by Asn227. The linker stretch occupies residues Val230–Gln250. Residues Gly251–Asn460 form an N-acetyltransferase region. Residues Arg333 and Lys351 each coordinate UDP-N-acetyl-alpha-D-glucosamine. The active-site Proton acceptor is the His363. UDP-N-acetyl-alpha-D-glucosamine is bound by residues Tyr366 and Asn377. Acetyl-CoA-binding positions include Ala380, Asn386–Tyr387, Ser405, Ala423, and Arg440.

In the N-terminal section; belongs to the N-acetylglucosamine-1-phosphate uridyltransferase family. It in the C-terminal section; belongs to the transferase hexapeptide repeat family. As to quaternary structure, homotrimer. It depends on Mg(2+) as a cofactor.

The protein localises to the cytoplasm. It carries out the reaction alpha-D-glucosamine 1-phosphate + acetyl-CoA = N-acetyl-alpha-D-glucosamine 1-phosphate + CoA + H(+). The catalysed reaction is N-acetyl-alpha-D-glucosamine 1-phosphate + UTP + H(+) = UDP-N-acetyl-alpha-D-glucosamine + diphosphate. Its pathway is nucleotide-sugar biosynthesis; UDP-N-acetyl-alpha-D-glucosamine biosynthesis; N-acetyl-alpha-D-glucosamine 1-phosphate from alpha-D-glucosamine 6-phosphate (route II): step 2/2. It participates in nucleotide-sugar biosynthesis; UDP-N-acetyl-alpha-D-glucosamine biosynthesis; UDP-N-acetyl-alpha-D-glucosamine from N-acetyl-alpha-D-glucosamine 1-phosphate: step 1/1. The protein operates within bacterial outer membrane biogenesis; LPS lipid A biosynthesis. In terms of biological role, catalyzes the last two sequential reactions in the de novo biosynthetic pathway for UDP-N-acetylglucosamine (UDP-GlcNAc). The C-terminal domain catalyzes the transfer of acetyl group from acetyl coenzyme A to glucosamine-1-phosphate (GlcN-1-P) to produce N-acetylglucosamine-1-phosphate (GlcNAc-1-P), which is converted into UDP-GlcNAc by the transfer of uridine 5-monophosphate (from uridine 5-triphosphate), a reaction catalyzed by the N-terminal domain. The chain is Bifunctional protein GlmU from Nitrosospira multiformis (strain ATCC 25196 / NCIMB 11849 / C 71).